Consider the following 256-residue polypeptide: Floral homeotic protein APETALA 1-2 (256 aa).

An MADS-box domain is found at 1 to 61; the sequence is MGRGRVQLKR…GKLFEYSTDS (61 aa). A K-box domain is found at 88-178; that stretch reads NTNWSMEYNR…SKQIKERENV (91 aa). Positions 187-206 are disordered; the sequence is DEQNHGHNMPPPPPPQQHQI.

Homodimer capable of binding to CArG-box sequences.

It localises to the nucleus. Functionally, transcription factor that promotes early floral meristem identity in synergy with LEAFY. Displays a redundant function with CAULIFLOWER in the up-regulation of LEAFY. Required subsequently for the transition of an inflorescence meristem into a floral meristem, and for the normal development of sepals and petals in flowers. Regulates positively B class homeotic proteins. The chain is Floral homeotic protein APETALA 1-2 (2AP1) from Brassica oleracea var. italica (Broccoli).